Consider the following 885-residue polypeptide: Probable LRR receptor-like serine/threonine-protein kinase At1g51820 (885 aa).

An N-terminal signal peptide occupies residues 1 to 20 (MERHFVFIATYLLIFHLVQA). Over 21–509 (QNQTGFISVD…GHKKKSVIVP (489 aa)) the chain is Extracellular. Residues Asn-22, Asn-93, Asn-135, Asn-194, Asn-228, Asn-250, Asn-254, Asn-281, Asn-287, Asn-424, Asn-437, Asn-456, and Asn-461 are each glycosylated (N-linked (GlcNAc...) asparagine). LRR repeat units lie at residues 403–424 (IITS…AIKN), 427–447 (HLQI…EFLA), and 451–473 (SLLV…LLQK). A helical transmembrane segment spans residues 510–530 (VVASIASIAVLIGALVLFLIL). The Cytoplasmic segment spans residues 531-885 (RKKRSPKVEG…FGTEVSPNAR (355 aa)). The Protein kinase domain maps to 578–851 (NNFQRILGKG…QVVIELNECL (274 aa)). Residues 584-592 (LGKGGFGMV) and Lys-606 contribute to the ATP site. At Tyr-651 the chain carries Phosphotyrosine. The active-site Proton acceptor is the Asp-703. A Phosphoserine modification is found at Ser-737. 2 positions are modified to phosphothreonine: Thr-738 and Thr-743. Tyr-751 is modified (phosphotyrosine).

This sequence belongs to the protein kinase superfamily. Ser/Thr protein kinase family.

The protein resides in the membrane. The catalysed reaction is L-seryl-[protein] + ATP = O-phospho-L-seryl-[protein] + ADP + H(+). It carries out the reaction L-threonyl-[protein] + ATP = O-phospho-L-threonyl-[protein] + ADP + H(+). The chain is Probable LRR receptor-like serine/threonine-protein kinase At1g51820 from Arabidopsis thaliana (Mouse-ear cress).